We begin with the raw amino-acid sequence, 181 residues long: Cytochrome b6-f complex iron-sulfur subunit (181 aa).

Positions 1-35 (MAQTGNFKSPARMSSLGQGAAPASAGAVTGGKPRE) are disordered. 2 helical membrane-spanning segments follow: residues 53-73 (VGGVGAVVAVSTLYPVVRYIV) and 114-134 (GGSLTAVSAICTHLGCLVHWD). One can recognise a Rieske domain in the interval 85-178 (LAVGPASDVP…VKIEDGKIVV (94 aa)). Positions 124, 126, 142, and 145 each coordinate [2Fe-2S] cluster. A disulfide bridge connects residues Cys-129 and Cys-144.

The protein belongs to the Rieske iron-sulfur protein family. The cofactor is [2Fe-2S] cluster.

Its subcellular location is the cell inner membrane. It catalyses the reaction 2 oxidized [plastocyanin] + a plastoquinol + 2 H(+)(in) = 2 reduced [plastocyanin] + a plastoquinone + 4 H(+)(out). Its function is as follows. Component of the green S-bacteria bc-complex which consists of the Rieske protein and cytochrome b subunit and which appears to lack a cytochrome c1-equivalent. This complex has a comparatively low redox potential. This chain is Cytochrome b6-f complex iron-sulfur subunit (petC), found in Chlorobaculum tepidum (strain ATCC 49652 / DSM 12025 / NBRC 103806 / TLS) (Chlorobium tepidum).